A 79-amino-acid chain; its full sequence is Acyl carrier protein (79 aa).

The Carrier domain occupies 2–77; that stretch reads ENIEQRVKKI…QAIDYVNAHL (76 aa). O-(pantetheine 4'-phosphoryl)serine is present on S37.

Belongs to the acyl carrier protein (ACP) family. Post-translationally, 4'-phosphopantetheine is transferred from CoA to a specific serine of apo-ACP by AcpS. This modification is essential for activity because fatty acids are bound in thioester linkage to the sulfhydryl of the prosthetic group.

It localises to the cytoplasm. The protein operates within lipid metabolism; fatty acid biosynthesis. Functionally, carrier of the growing fatty acid chain in fatty acid biosynthesis. The protein is Acyl carrier protein of Azoarcus sp. (strain BH72).